A 78-amino-acid polypeptide reads, in one-letter code: MARVCQVTGKRPMSGHNVSHANNKTKRRFLPNLQSRRFWLESENRWIRLRLTNAALRTVDKNGIDSVVADMRARGERV.

Residues 1–26 (MARVCQVTGKRPMSGHNVSHANNKTK) are disordered.

This sequence belongs to the bacterial ribosomal protein bL28 family.

The protein is Large ribosomal subunit protein bL28 of Nitrosomonas europaea (strain ATCC 19718 / CIP 103999 / KCTC 2705 / NBRC 14298).